The sequence spans 146 residues: Hemoglobin subunit beta (146 aa).

Val-1 is subject to N-acetylvaline. The region spanning 2-146 (HLTGEEKAAV…VANALAHKYH (145 aa)) is the Globin domain. Position 12 is a phosphothreonine (Thr-12). Residue Ser-44 is modified to Phosphoserine. Lys-59 bears the N6-acetyllysine mark. His-63 contributes to the heme b binding site. Position 82 is an N6-acetyllysine (Lys-82). His-92 contacts heme b. The residue at position 93 (Cys-93) is an S-nitrosocysteine. Lys-144 is modified (N6-acetyllysine).

This sequence belongs to the globin family. Heterotetramer of two alpha chains and two beta chains. In terms of tissue distribution, red blood cells.

Involved in oxygen transport from the lung to the various peripheral tissues. This Lutra lutra (European river otter) protein is Hemoglobin subunit beta (HBB).